The sequence spans 187 residues: Protein dj-1beta (187 aa).

C45 carries the cysteine sulfinic acid (-SO2H) modification. C104 serves as the catalytic Nucleophile. C104 bears the Cysteine sulfinic acid (-SO2H); alternate mark.

In terms of processing, oxidation of Cys-45 and Cys-104 in response to oxidative stress. Levels of oxidation increase with age. As to expression, expressed in the head and testis (at protein level). Ubiquitously expressed at constant levels.

Its subcellular location is the mitochondrion. The protein resides in the cytoplasm. The protein localises to the nucleus. Its function is as follows. Plays an important role in cell protection against oxidative stress and cell death by acting as a oxidative stress sensor. Does not play a role in methylglyoxal detoxification. Plays a role in mitochondrial function together with Pink1. In motor neurons regulates structural synaptic plasticity of locomotor behavior as part of the PTEN-phosphatidylinositol 3-kinase pathway in response to oxygen species (ROS) levels. In Drosophila melanogaster (Fruit fly), this protein is Protein dj-1beta.